A 449-amino-acid polypeptide reads, in one-letter code: Chromosomal replication initiator protein DnaA (449 aa).

The interval 1–69 (MEKVWLEAQS…VEAISSLTSV (69 aa)) is domain I, interacts with DnaA modulators. The domain II stretch occupies residues 69–112 (VKYQIEFKITEKIPLESKPVDNFTPVIKDNEPSKETNKNIDITA). Residues 113 to 329 (NLNPKYTFDS…GMLIRLGAYA (217 aa)) form a domain III, AAA+ region region. ATP contacts are provided by Gly157, Gly159, Lys160, and Thr161. A domain IV, binds dsDNA region spans residues 330-449 (SLTGSEITLN…VENLKKELIT (120 aa)).

The protein belongs to the DnaA family. As to quaternary structure, oligomerizes as a right-handed, spiral filament on DNA at oriC.

It localises to the cytoplasm. Plays an essential role in the initiation and regulation of chromosomal replication. ATP-DnaA binds to the origin of replication (oriC) to initiate formation of the DNA replication initiation complex once per cell cycle. Binds the DnaA box (a 9 base pair repeat at the origin) and separates the double-stranded (ds)DNA. Forms a right-handed helical filament on oriC DNA; dsDNA binds to the exterior of the filament while single-stranded (ss)DNA is stabiized in the filament's interior. The ATP-DnaA-oriC complex binds and stabilizes one strand of the AT-rich DNA unwinding element (DUE), permitting loading of DNA polymerase. After initiation quickly degrades to an ADP-DnaA complex that is not apt for DNA replication. Binds acidic phospholipids. This is Chromosomal replication initiator protein DnaA from Geotalea uraniireducens (strain Rf4) (Geobacter uraniireducens).